A 255-amino-acid chain; its full sequence is Electron transfer flavoprotein beta subunit lysine methyltransferase (255 aa).

A mitochondrion-targeting transit peptide spans Met-1–Val-32.

It belongs to the methyltransferase superfamily. ETFBKMT family. In terms of assembly, interacts with HSPD1; this protein may possibly be a methylation substrate.

It localises to the cytoplasm. The protein resides in the mitochondrion matrix. The enzyme catalyses L-lysyl-[protein] + 3 S-adenosyl-L-methionine = N(6),N(6),N(6)-trimethyl-L-lysyl-[protein] + 3 S-adenosyl-L-homocysteine + 3 H(+). Protein-lysine methyltransferase that selectively trimethylates the flavoprotein ETFB in mitochondria. Thereby, may negatively regulate the function of ETFB in electron transfer from Acyl-CoA dehydrogenases. The polypeptide is Electron transfer flavoprotein beta subunit lysine methyltransferase (Mus musculus (Mouse)).